An 87-amino-acid polypeptide reads, in one-letter code: Phosphoribosyl-ATP pyrophosphatase (87 aa).

It belongs to the PRA-PH family.

It localises to the cytoplasm. It catalyses the reaction 1-(5-phospho-beta-D-ribosyl)-ATP + H2O = 1-(5-phospho-beta-D-ribosyl)-5'-AMP + diphosphate + H(+). The protein operates within amino-acid biosynthesis; L-histidine biosynthesis; L-histidine from 5-phospho-alpha-D-ribose 1-diphosphate: step 2/9. The protein is Phosphoribosyl-ATP pyrophosphatase of Nocardia farcinica (strain IFM 10152).